The sequence spans 305 residues: Divergent heme oxygenase-like protein (305 aa).

Residues 1 to 18 (MIRKIIILMFTFFSNIHN) form the signal peptide. The tract at residues 1–83 (MIRKIIILMF…GVDKNNINYN (83 aa)) is sufficient for apicoplast targeting. Asn-132, Asn-159, and Asn-288 each carry an N-linked (GlcNAc...) asparagine glycan.

Post-translationally, proteolytically cleaved; targeted by its N-terminal leader sequence for import into the apicoplast where it undergoes proteolytic processing, resulting in an N-terminus starting at or near Gly-33 in the mature protein.

It is found in the plastid. It localises to the apicoplast. Essential for blood-stage parasite viability. Required for apicoplast biogenesis. Associates with the apicoplast genome and mediates apicoplast gene expression. Can bind heme. Can bind protoporphyrin IX. This is Divergent heme oxygenase-like protein from Plasmodium falciparum (isolate 3D7).